Reading from the N-terminus, the 204-residue chain is Large ribosomal subunit protein uL4 (204 aa).

A disordered region spans residues 49–75; that stretch reads TKGRSDVSGGGKKPWRQKGRGGARAGS.

Belongs to the universal ribosomal protein uL4 family. In terms of assembly, part of the 50S ribosomal subunit.

Functionally, one of the primary rRNA binding proteins, this protein initially binds near the 5'-end of the 23S rRNA. It is important during the early stages of 50S assembly. It makes multiple contacts with different domains of the 23S rRNA in the assembled 50S subunit and ribosome. Its function is as follows. Forms part of the polypeptide exit tunnel. The polypeptide is Large ribosomal subunit protein uL4 (Campylobacter lari (strain RM2100 / D67 / ATCC BAA-1060)).